We begin with the raw amino-acid sequence, 207 residues long: Large ribosomal subunit protein uL4 (207 aa).

A disordered region spans residues 50 to 75 (KTKTVSEVSGTTKKPFKQKGTGNARQ).

It belongs to the universal ribosomal protein uL4 family. As to quaternary structure, part of the 50S ribosomal subunit.

Its function is as follows. One of the primary rRNA binding proteins, this protein initially binds near the 5'-end of the 23S rRNA. It is important during the early stages of 50S assembly. It makes multiple contacts with different domains of the 23S rRNA in the assembled 50S subunit and ribosome. Functionally, forms part of the polypeptide exit tunnel. This is Large ribosomal subunit protein uL4 from Rickettsia akari (strain Hartford).